Reading from the N-terminus, the 315-residue chain is tRNA dimethylallyltransferase (315 aa).

ATP is bound at residue 10–17 (GPTEVGKT). Residue 12-17 (TEVGKT) coordinates substrate. The interval 35 to 38 (DSMQ) is interaction with substrate tRNA.

It belongs to the IPP transferase family. As to quaternary structure, monomer. Mg(2+) serves as cofactor.

It catalyses the reaction adenosine(37) in tRNA + dimethylallyl diphosphate = N(6)-dimethylallyladenosine(37) in tRNA + diphosphate. Its function is as follows. Catalyzes the transfer of a dimethylallyl group onto the adenine at position 37 in tRNAs that read codons beginning with uridine, leading to the formation of N6-(dimethylallyl)adenosine (i(6)A). The protein is tRNA dimethylallyltransferase of Geobacillus thermodenitrificans (strain NG80-2).